Consider the following 562-residue polypeptide: MAASGFLLIASFMLVLLVLARPLGSFLARLIEGDPFMPLQKIEAGLWRCSGVKNVEMNGWQYALAILLFNILGIALLFALLMMQGALPLNPENMPGMSWHLALNTAVSFVTNTNWQAYSGENTLSYLSQMAGLTVQNFLSAATGIAVAFALIRAFSRHSAATLGNAWVDLVRITLYVLLPIALIIALIFVSQGVLQNLDGYLHITTLEGVKQTLPMGPVASQEAIKMLGTNGGGFFGANSAHPFENPTAFSNFVQMLAIFLIPCALCFAFGQVVGDTRQGHALIWAMSLIFVVAVVVVMYAELAGNPHLIKLGADSNINMEGKESRFGILATSMYAVVTTAASCGAVNAMHDSFTALGGMVPMWLMQIGEVVFGGVGSGLYGMLLFVLLTVFIAGLMIGRTPEYLGKKIDVFDMKMTALAILVTPAVVLLGTALALCTDAGRAGILNPGAHGFSEVLYALSSAANNNGSAFAGLSVNTPFYNLLLAAAMFLGRFGVILPVLAIASSLVAKKRQPAGNGTLPTSGPLFIGLLVGTVLLVGALTFIPALALGPVAEHLQVWLTH.

12 helical membrane passes run phenylalanine 6–phenylalanine 26, alanine 63–methionine 83, glycine 132–isoleucine 152, leucine 175–leucine 195, phenylalanine 253–valine 273, leucine 283–leucine 303, phenylalanine 327–valine 347, alanine 356–valine 376, glycine 379–glycine 399, methionine 416–leucine 436, leucine 483–isoleucine 503, and leucine 526–alanine 546.

The protein belongs to the KdpA family. The system is composed of three essential subunits: KdpA, KdpB and KdpC.

Its subcellular location is the cell inner membrane. Part of the high-affinity ATP-driven potassium transport (or Kdp) system, which catalyzes the hydrolysis of ATP coupled with the electrogenic transport of potassium into the cytoplasm. This subunit binds the periplasmic potassium ions and delivers the ions to the membrane domain of KdpB through an intramembrane tunnel. This Yersinia enterocolitica serotype O:8 / biotype 1B (strain NCTC 13174 / 8081) protein is Potassium-transporting ATPase potassium-binding subunit.